A 243-amino-acid chain; its full sequence is Probable transcriptional regulatory protein Patl_0550 (243 aa).

It belongs to the TACO1 family.

It localises to the cytoplasm. The polypeptide is Probable transcriptional regulatory protein Patl_0550 (Pseudoalteromonas atlantica (strain T6c / ATCC BAA-1087)).